A 273-amino-acid chain; its full sequence is MHEAQIRVAIAGAGGRMGRQLIQAAMAMEGVQLGAALEREGSSLLGSDAGELAGAGKSGVIVQSSLEAVKDDFDVFIDFTRPEGTLTHLAFCRQHGKGMVIGTTGFDDAGKQAIREASQEIAIVFAANFSVGVNVMLKLLEKAAKVMGDYSDIEIIEAHHRHKVDAPSGTALAMGEAIAGALDKNLKDCAVYSREGYTGERVPGTIGFATVRAGDIVGEHTAMFADIGERVEITHKASSRMTFANGALRSALWLKTKKNGLFDMRDVLGLDVL.

NAD(+) is bound by residues 12–17 (GAGGRM) and Glu38. Arg39 is a binding site for NADP(+). NAD(+) is bound by residues 102–104 (GTT) and 126–129 (AANF). The active-site Proton donor/acceptor is the His159. His160 contributes to the (S)-2,3,4,5-tetrahydrodipicolinate binding site. Catalysis depends on Lys163, which acts as the Proton donor. 169-170 (GT) lines the (S)-2,3,4,5-tetrahydrodipicolinate pocket.

Belongs to the DapB family. As to quaternary structure, homotetramer.

The protein localises to the cytoplasm. It carries out the reaction (S)-2,3,4,5-tetrahydrodipicolinate + NAD(+) + H2O = (2S,4S)-4-hydroxy-2,3,4,5-tetrahydrodipicolinate + NADH + H(+). The enzyme catalyses (S)-2,3,4,5-tetrahydrodipicolinate + NADP(+) + H2O = (2S,4S)-4-hydroxy-2,3,4,5-tetrahydrodipicolinate + NADPH + H(+). It functions in the pathway amino-acid biosynthesis; L-lysine biosynthesis via DAP pathway; (S)-tetrahydrodipicolinate from L-aspartate: step 4/4. Its function is as follows. Catalyzes the conversion of 4-hydroxy-tetrahydrodipicolinate (HTPA) to tetrahydrodipicolinate. The polypeptide is 4-hydroxy-tetrahydrodipicolinate reductase (Salmonella agona (strain SL483)).